Here is a 217-residue protein sequence, read N- to C-terminus: Imidazole glycerol phosphate synthase subunit HisH (217 aa).

Residues 5-217 form the Glutamine amidotransferase type-1 domain; it reads RVGIINYGVG…LRLLANFLTL (213 aa). The active-site Nucleophile is the Cys93. Residues His199 and Glu201 contribute to the active site.

Heterodimer of HisH and HisF.

It localises to the cytoplasm. It carries out the reaction 5-[(5-phospho-1-deoxy-D-ribulos-1-ylimino)methylamino]-1-(5-phospho-beta-D-ribosyl)imidazole-4-carboxamide + L-glutamine = D-erythro-1-(imidazol-4-yl)glycerol 3-phosphate + 5-amino-1-(5-phospho-beta-D-ribosyl)imidazole-4-carboxamide + L-glutamate + H(+). The enzyme catalyses L-glutamine + H2O = L-glutamate + NH4(+). Its pathway is amino-acid biosynthesis; L-histidine biosynthesis; L-histidine from 5-phospho-alpha-D-ribose 1-diphosphate: step 5/9. IGPS catalyzes the conversion of PRFAR and glutamine to IGP, AICAR and glutamate. The HisH subunit catalyzes the hydrolysis of glutamine to glutamate and ammonia as part of the synthesis of IGP and AICAR. The resulting ammonia molecule is channeled to the active site of HisF. In Helicobacter hepaticus (strain ATCC 51449 / 3B1), this protein is Imidazole glycerol phosphate synthase subunit HisH.